A 328-amino-acid polypeptide reads, in one-letter code: Beta-agarase C (328 aa).

Residues 1–17 (MNLTKMAVFAASLFCLA) form the signal peptide. A propeptide spanning residues 18-67 (CKNDIDTELEKKSIPESEIQKSEEKLPNEEELTPTDPDEETNKEETVTAN) is cleaved from the precursor. Positions 26-45 (LEKKSIPESEIQKSEEKLPN) are enriched in basic and acidic residues. The segment at 26 to 61 (LEKKSIPESEIQKSEEKLPNEEELTPTDPDEETNKE) is disordered. Residues 46–59 (EEELTPTDPDEETN) are compositionally biased toward acidic residues. The 259-residue stretch at 70–328 (YDFTGNTPPP…WIHTYQLVEE (259 aa)) folds into the GH16 domain. Residues Trp-110, 119–129 (KAENSGVSDGK), 133–135 (KAT), Glu-188, Glu-193, and Arg-224 each bind substrate. The active-site Nucleophile is the Glu-188. Glu-193 functions as the Proton donor in the catalytic mechanism.

The protein belongs to the glycosyl hydrolase 16 family.

Its subcellular location is the secreted. It carries out the reaction Hydrolysis of (1-&gt;4)-beta-D-galactosidic linkages in agarose, giving the tetramer as the predominant product.. Its function is as follows. Cleaves the beta-1,4-linkages between beta-D-galactose and alpha-L-3,6-anhydro-galactose residues in agarose. Cleaves agarose in a random manner with retention of the anomeric-bond configuration, producing beta-anomers that give rise progressively to alpha-anomers when mutarotation takes place. The chain is Beta-agarase C (agaC) from Zobellia galactanivorans (strain DSM 12802 / CCUG 47099 / CIP 106680 / NCIMB 13871 / Dsij).